Consider the following 207-residue polypeptide: MSRYRGPRLRIIRRLQNLPGLTNKLVESKKKKVSGSDQSIQKKVSQYGIRLEAKQRLRFNYGLTERQLLNYVRIARCAKGSTGQILLQLLEMRLDNILFRLGFVPTIPSARQLINHRHILVNNRIVDVPSFHCKPKDIITIEAPKTYQSILSKRLESFAKDQIPEHLTLSLSEPKKPKGFVNYLINRESIGLKINELLVVEYYSRKA.

An S4 RNA-binding domain is found at 92–153 (MRLDNILFRL…PKTYQSILSK (62 aa)).

The protein belongs to the universal ribosomal protein uS4 family. In terms of assembly, part of the 30S ribosomal subunit. Contacts protein S5. The interaction surface between S4 and S5 is involved in control of translational fidelity.

The protein localises to the plastid. The protein resides in the chloroplast. One of the primary rRNA binding proteins, it binds directly to 16S rRNA where it nucleates assembly of the body of the 30S subunit. In terms of biological role, with S5 and S12 plays an important role in translational accuracy. The polypeptide is Small ribosomal subunit protein uS4c (rps4) (Equisetum hyemale (Dutch rush)).